Here is a 149-residue protein sequence, read N- to C-terminus: MVDWEKVNSVWSAVESDLTAIGQNILLRLFEQYPESQNHFPKFKNKSLGELKDTADIKAQADTVLSALGNIVKKKGSHSQPVKALAATHITTHKIPPHYFTKITTIAVDVLSEMYPSEMNAQVQAAFSGAFKIICSDIEKEYKAANFQG.

N-acetylvaline is present on Val2. Residues 2–143 enclose the Globin domain; sequence VDWEKVNSVW…ICSDIEKEYK (142 aa). His89 serves as a coordination point for heme b.

Belongs to the globin family. As to quaternary structure, monomeric.

Its subcellular location is the cytoplasm. The protein resides in the sarcoplasm. The enzyme catalyses Fe(III)-heme b-[protein] + nitric oxide + H2O = Fe(II)-heme b-[protein] + nitrite + 2 H(+). The catalysed reaction is H2O2 + AH2 = A + 2 H2O. In terms of biological role, monomeric heme protein which primary function is to store oxygen and facilitate its diffusion within muscle tissues. Reversibly binds oxygen through a pentacoordinated heme iron and enables its timely and efficient release as needed during periods of heightened demand. Depending on the oxidative conditions of tissues and cells, and in addition to its ability to bind oxygen, it also has a nitrite reductase activity whereby it regulates the production of bioactive nitric oxide. Under stress conditions, like hypoxia and anoxia, it also protects cells against reactive oxygen species thanks to its pseudoperoxidase activity. This Mustelus antarcticus (Gummy shark) protein is Myoglobin (mb).